A 269-amino-acid chain; its full sequence is Formamidopyrimidine-DNA glycosylase (269 aa).

The Schiff-base intermediate with DNA role is filled by Pro2. The active-site Proton donor is Glu3. Lys57 functions as the Proton donor; for beta-elimination activity in the catalytic mechanism. DNA is bound by residues His90, Arg109, and Lys150. The segment at 235-269 (QVYGRKGEPCRVCGTPIVATKHAQRATFYCRQCQK) adopts an FPG-type zinc-finger fold. The active-site Proton donor; for delta-elimination activity is the Arg259.

This sequence belongs to the FPG family. As to quaternary structure, monomer. Zn(2+) serves as cofactor.

It carries out the reaction Hydrolysis of DNA containing ring-opened 7-methylguanine residues, releasing 2,6-diamino-4-hydroxy-5-(N-methyl)formamidopyrimidine.. It catalyses the reaction 2'-deoxyribonucleotide-(2'-deoxyribose 5'-phosphate)-2'-deoxyribonucleotide-DNA = a 3'-end 2'-deoxyribonucleotide-(2,3-dehydro-2,3-deoxyribose 5'-phosphate)-DNA + a 5'-end 5'-phospho-2'-deoxyribonucleoside-DNA + H(+). In terms of biological role, involved in base excision repair of DNA damaged by oxidation or by mutagenic agents. Acts as a DNA glycosylase that recognizes and removes damaged bases. Has a preference for oxidized purines, such as 7,8-dihydro-8-oxoguanine (8-oxoG). Has AP (apurinic/apyrimidinic) lyase activity and introduces nicks in the DNA strand. Cleaves the DNA backbone by beta-delta elimination to generate a single-strand break at the site of the removed base with both 3'- and 5'-phosphates. The polypeptide is Formamidopyrimidine-DNA glycosylase (Escherichia coli (strain 55989 / EAEC)).